The following is a 200-amino-acid chain: Recombination protein RecR (200 aa).

The C4-type zinc-finger motif lies at 59–74 (CEVCGNVCESSPCTIC). Residues 82-177 (GTICVVEEPK…KVTRLASGLP (96 aa)) enclose the Toprim domain.

This sequence belongs to the RecR family.

Functionally, may play a role in DNA repair. It seems to be involved in an RecBC-independent recombinational process of DNA repair. It may act with RecF and RecO. The polypeptide is Recombination protein RecR (Bifidobacterium animalis subsp. lactis (strain AD011)).